A 231-amino-acid chain; its full sequence is 7-cyano-7-deazaguanine synthase (231 aa).

ATP is bound at residue 8 to 18 (FSGGQDSTTCL). Zn(2+) is bound by residues Cys-188, Cys-197, Cys-200, and Cys-203.

This sequence belongs to the QueC family. Zn(2+) is required as a cofactor.

It carries out the reaction 7-carboxy-7-deazaguanine + NH4(+) + ATP = 7-cyano-7-deazaguanine + ADP + phosphate + H2O + H(+). The protein operates within purine metabolism; 7-cyano-7-deazaguanine biosynthesis. In terms of biological role, catalyzes the ATP-dependent conversion of 7-carboxy-7-deazaguanine (CDG) to 7-cyano-7-deazaguanine (preQ(0)). The protein is 7-cyano-7-deazaguanine synthase of Pectobacterium carotovorum subsp. carotovorum (strain PC1).